Reading from the N-terminus, the 690-residue chain is UvrABC system protein B (690 aa).

Residues 39–422 (EGLDDGLSFQ…EQQHAGQVVE (384 aa)) form the Helicase ATP-binding domain. An ATP-binding site is contributed by 52–59 (GVTGSGKT). The Beta-hairpin signature appears at 105–128 (YYDYYQPEAYVPSRDLFIEKDSSI). Residues 443-596 (QVDDLLAEIG…QIAFNLEHGI (154 aa)) enclose the Helicase C-terminal domain. The UVR domain maps to 640–675 (AREIKRLEKSMMECAKNLEFEKAAAARDDLFRLRER).

Belongs to the UvrB family. Forms a heterotetramer with UvrA during the search for lesions. Interacts with UvrC in an incision complex.

The protein localises to the cytoplasm. In terms of biological role, the UvrABC repair system catalyzes the recognition and processing of DNA lesions. A damage recognition complex composed of 2 UvrA and 2 UvrB subunits scans DNA for abnormalities. Upon binding of the UvrA(2)B(2) complex to a putative damaged site, the DNA wraps around one UvrB monomer. DNA wrap is dependent on ATP binding by UvrB and probably causes local melting of the DNA helix, facilitating insertion of UvrB beta-hairpin between the DNA strands. Then UvrB probes one DNA strand for the presence of a lesion. If a lesion is found the UvrA subunits dissociate and the UvrB-DNA preincision complex is formed. This complex is subsequently bound by UvrC and the second UvrB is released. If no lesion is found, the DNA wraps around the other UvrB subunit that will check the other stand for damage. The sequence is that of UvrABC system protein B from Dechloromonas aromatica (strain RCB).